The chain runs to 101 residues: uncharacterized protein (101 aa).

Residues F13 to F33 traverse the membrane as a helical segment.

Its subcellular location is the membrane. This is an uncharacterized protein from Schizosaccharomyces pombe (strain 972 / ATCC 24843) (Fission yeast).